The following is a 159-amino-acid chain: MNKNTQGKPSGKPVRRDGVDPVLRSRARRRAVQAIYAWQISGGNAQSLIAQFAHEQAREIADLAYFEALLHGVLDNRRDIDEALGPYLDRGIEEVDAIERAVLRLAGYELRYRLDVPYRVVINEAIESAKRFGSEHGHTYVNGVLDRAAVEWRKVESGH.

It belongs to the NusB family.

Its function is as follows. Involved in transcription antitermination. Required for transcription of ribosomal RNA (rRNA) genes. Binds specifically to the boxA antiterminator sequence of the ribosomal RNA (rrn) operons. The polypeptide is Transcription antitermination protein NusB (Stenotrophomonas maltophilia (strain K279a)).